The primary structure comprises 104 residues: Small ribosomal subunit protein uS10 (104 aa).

Belongs to the universal ribosomal protein uS10 family. As to quaternary structure, part of the 30S ribosomal subunit.

In terms of biological role, involved in the binding of tRNA to the ribosomes. This Hydrogenobaculum sp. (strain Y04AAS1) protein is Small ribosomal subunit protein uS10.